A 142-amino-acid polypeptide reads, in one-letter code: Interleukin-3 (142 aa).

The signal sequence occupies residues 1-18 (MSHLPILLLLLLVSPGLQ). N-linked (GlcNAc...) asparagine glycosylation occurs at asparagine 33. Cysteine 34 and cysteine 102 are disulfide-bonded.

This sequence belongs to the IL-3 family. Monomer. In terms of tissue distribution, activated T-cells, mast cells, natural killer cells.

Its subcellular location is the secreted. Functionally, granulocyte/macrophage colony-stimulating factors are cytokines that act in hematopoiesis by controlling the production, differentiation, and function of 2 related white cell populations of the blood, the granulocytes and the monocytes-macrophages. In terms of biological role, this CSF induces granulocytes, macrophages, mast cells, stem cells, erythroid cells, eosinophils and megakaryocytes. In Callithrix jacchus (White-tufted-ear marmoset), this protein is Interleukin-3 (IL3).